Consider the following 346-residue polypeptide: Elongation factor Ts (346 aa).

The tract at residues 80-83 is involved in Mg(2+) ion dislocation from EF-Tu; it reads TDFV.

Belongs to the EF-Ts family.

The protein resides in the cytoplasm. In terms of biological role, associates with the EF-Tu.GDP complex and induces the exchange of GDP to GTP. It remains bound to the aminoacyl-tRNA.EF-Tu.GTP complex up to the GTP hydrolysis stage on the ribosome. This is Elongation factor Ts from Streptococcus uberis (strain ATCC BAA-854 / 0140J).